Consider the following 517-residue polypeptide: UDP-N-acetylmuramyl-tripeptide synthetase (517 aa).

A UDP-N-acetyl-alpha-D-muramoyl-L-alanyl-D-glutamate-binding site is contributed by Thr48. Gly125 to Thr131 lines the ATP pocket. UDP-N-acetyl-alpha-D-muramoyl-L-alanyl-D-glutamate is bound by residues Thr169–Thr170, Ser196, and Arg204. At Lys238 the chain carries N6-carboxylysine.

The protein belongs to the MurCDEF family. MurE subfamily. Post-translationally, carboxylation is probably crucial for Mg(2+) binding and, consequently, for the gamma-phosphate positioning of ATP.

The protein localises to the cytoplasm. The protein operates within cell wall biogenesis; peptidoglycan biosynthesis. Its function is as follows. Catalyzes the addition of an amino acid to the nucleotide precursor UDP-N-acetylmuramoyl-L-alanyl-D-glutamate (UMAG) in the biosynthesis of bacterial cell-wall peptidoglycan. This chain is UDP-N-acetylmuramyl-tripeptide synthetase, found in Bifidobacterium longum (strain NCC 2705).